A 77-amino-acid polypeptide reads, in one-letter code: Small ribosomal subunit protein bS18 (77 aa).

The protein belongs to the bacterial ribosomal protein bS18 family. Part of the 30S ribosomal subunit. Forms a tight heterodimer with protein bS6.

Its function is as follows. Binds as a heterodimer with protein bS6 to the central domain of the 16S rRNA, where it helps stabilize the platform of the 30S subunit. The sequence is that of Small ribosomal subunit protein bS18 from Shouchella clausii (strain KSM-K16) (Alkalihalobacillus clausii).